A 477-amino-acid chain; its full sequence is Sensor protein kinase PmrB (477 aa).

Transmembrane regions (helical) follow at residues 13–33 (LLVNLLVGFVLCWLSVAALTY) and 161–181 (LLLFYSLFPLLLALPLLGGLV). In terms of domain architecture, HAMP spans 186-238 (ARGLAPLREVQAEVQQRSARHLQPIAVEAVPLEIRGLIDELNLLLERLRTALE). Residues 246 to 459 (DAAHEIRTPL…EVQVFLPKTQ (214 aa)) form the Histidine kinase domain. His249 is modified (phosphohistidine; by autocatalysis). Residues 455–477 (LPKTQPDATRPPARGPDSGRSHI) form a disordered region.

Its subcellular location is the membrane. The catalysed reaction is ATP + protein L-histidine = ADP + protein N-phospho-L-histidine.. Member of the two-component regulatory system PmrA/PmrB that plays a role in the regulation of resistance towards polymyxin B and cationic antimicrobial peptides in response to limiting concentrations of Mg(2+). Also autoregulates its own pmrAB operon under Mg(2+)-limiting conditions. May function as a membrane-associated protein kinase that phosphorylates PmrA in response to environmental signals leading to activation of specific gene promoters. The chain is Sensor protein kinase PmrB (pmrB) from Pseudomonas aeruginosa (strain ATCC 15692 / DSM 22644 / CIP 104116 / JCM 14847 / LMG 12228 / 1C / PRS 101 / PAO1).